The primary structure comprises 100 residues: Urease subunit gamma (100 aa).

Belongs to the urease gamma subunit family. Heterotrimer of UreA (gamma), UreB (beta) and UreC (alpha) subunits. Three heterotrimers associate to form the active enzyme.

Its subcellular location is the cytoplasm. It catalyses the reaction urea + 2 H2O + H(+) = hydrogencarbonate + 2 NH4(+). It functions in the pathway nitrogen metabolism; urea degradation; CO(2) and NH(3) from urea (urease route): step 1/1. The polypeptide is Urease subunit gamma (Mesorhizobium japonicum (strain LMG 29417 / CECT 9101 / MAFF 303099) (Mesorhizobium loti (strain MAFF 303099))).